Reading from the N-terminus, the 485-residue chain is N-succinylglutamate 5-semialdehyde dehydrogenase (485 aa).

220–225 (GSANTG) is an NAD(+) binding site. Catalysis depends on residues E243 and C278.

This sequence belongs to the aldehyde dehydrogenase family. AstD subfamily.

The catalysed reaction is N-succinyl-L-glutamate 5-semialdehyde + NAD(+) + H2O = N-succinyl-L-glutamate + NADH + 2 H(+). It functions in the pathway amino-acid degradation; L-arginine degradation via AST pathway; L-glutamate and succinate from L-arginine: step 4/5. Catalyzes the NAD-dependent reduction of succinylglutamate semialdehyde into succinylglutamate. The sequence is that of N-succinylglutamate 5-semialdehyde dehydrogenase from Vibrio vulnificus (strain YJ016).